A 395-amino-acid polypeptide reads, in one-letter code: Putative gustatory receptor 58a (395 aa).

The Cytoplasmic portion of the chain corresponds to 1–32 (MLLKFMYIYGIGCGLMPAPLKKGQFLLGYKQR). The chain crosses the membrane as a helical span at residues 33–53 (WYLIYTACLHGGLLTVLPFTF). Residues 54–72 (PHYMYDDSYMSSNPVLKWT) are Extracellular-facing. Residues 73-93 (FNLTNITRIMAMFSGVLLMWF) form a helical membrane-spanning segment. The Cytoplasmic segment spans residues 94–131 (RRKRILNLGENLILHCLKCKTLDNRSKKYSKLRKRVRN). A helical membrane pass occupies residues 132 to 152 (VLFQMLLVANLSILLGALILF). At 153–169 (RIHSVQRISKTAMIVAH) the chain is on the extracellular side. Residues 170–190 (ITQFIYVVFMMTGICVILLVL) traverse the membrane as a helical segment. Residues 191–250 (HWQSERLQIALKDLCSFLNHEERNSLTLSENKANRSLGKLAKLFKLFAENQRLVREVFRT) are Cytoplasmic-facing. A helical transmembrane segment spans residues 251 to 271 (FDLPIALLLLKMFVTNVNLVY). Over 272-288 (HGVQFGNDTIETSSYTR) the chain is Extracellular. Residue asparagine 278 is glycosylated (N-linked (GlcNAc...) asparagine). Residues 289-309 (IVGQWVVISHYWSAVLLMNVV) form a helical membrane-spanning segment. Topologically, residues 310-366 (DDVTRRSDLKMGDLLREFSHLELVKRDFHLQLELFSDHLRCHPSTYKVCGLFIFNKQ) are cytoplasmic. The chain crosses the membrane as a helical span at residues 367-387 (TSLAYFFYVLVQVLVLVQFDL). At 388–395 (KNKVEKRN) the chain is on the extracellular side.

The protein belongs to the insect chemoreceptor superfamily. Gustatory receptor (GR) family. Gr22e subfamily. Expressed in the adult labellar chemosensory neurons.

It localises to the cell membrane. In terms of biological role, probable gustatory receptor which mediates acceptance or avoidance behavior, depending on its substrates. The chain is Putative gustatory receptor 58a (Gr58a) from Drosophila melanogaster (Fruit fly).